A 234-amino-acid polypeptide reads, in one-letter code: Large ribosomal subunit protein uL1 (234 aa).

The protein belongs to the universal ribosomal protein uL1 family. As to quaternary structure, part of the 50S ribosomal subunit.

Binds directly to 23S rRNA. The L1 stalk is quite mobile in the ribosome, and is involved in E site tRNA release. Functionally, protein L1 is also a translational repressor protein, it controls the translation of the L11 operon by binding to its mRNA. The protein is Large ribosomal subunit protein uL1 of Escherichia coli (strain 55989 / EAEC).